Consider the following 881-residue polypeptide: Protein P (881 aa).

Residues 1-184 form a terminal protein domain (TP) region; that stretch reads MHPFYQLFRN…GKPYSWEHRQ (184 aa). The segment at 185 to 384 is spacer; sequence LEQHNGQQHK…YCLHHIVSSI (200 aa). The tract at residues 263 to 351 is disordered; the sequence is IPCESKAPSE…PAGICRGTES (89 aa). Composition is skewed to polar residues over residues 270–279 and 287–314; these read PSEQQQSSLR and NQIQAYNSSRNKGYTTWHSTTSDSIQSG. Residues 326–340 are compositionally biased toward basic and acidic residues; the sequence is FERHTPSFDNEKSDR. A polymerase/reverse transcriptase domain (RT) region spans residues 385-726; it reads DDWGPCTFDG…YGELWPVARQ (342 aa). The Reverse transcriptase domain maps to 395 to 636; it reads DVTIRSPRTP…HTLHFMGYTI (242 aa). Mg(2+)-binding residues include Asp-467, Asp-587, and Asp-588.

The protein belongs to the hepadnaviridae P protein family.

It carries out the reaction DNA(n) + a 2'-deoxyribonucleoside 5'-triphosphate = DNA(n+1) + diphosphate. The enzyme catalyses Endonucleolytic cleavage to 5'-phosphomonoester.. Activated by host HSP70 and HSP40 in vitro to be able to bind the epsilon loop of the pgRNA. Because deletion of the RNase H region renders the protein partly chaperone-independent, the chaperones may be needed indirectly to relieve occlusion of the RNA-binding site by this domain. Inhibited by several reverse-transcriptase inhibitors: Lamivudine, Adefovir and Entecavir. Its function is as follows. Multifunctional enzyme that converts the viral RNA genome into dsDNA in viral cytoplasmic capsids. This enzyme displays a DNA polymerase activity that can copy either DNA or RNA templates, and a ribonuclease H (RNase H) activity that cleaves the RNA strand of RNA-DNA heteroduplexes in a partially processive 3'- to 5'-endonucleasic mode. Neo-synthesized pregenomic RNA (pgRNA) are encapsidated together with the P protein, and reverse-transcribed inside the nucleocapsid. Initiation of reverse-transcription occurs first by binding the epsilon loop on the pgRNA genome, and is initiated by protein priming, thereby the 5'-end of (-)DNA is covalently linked to P protein. Partial (+)DNA is synthesized from the (-)DNA template and generates the relaxed circular DNA (RC-DNA) genome. After budding and infection, the RC-DNA migrates in the nucleus, and is converted into a plasmid-like covalently closed circular DNA (cccDNA). The activity of P protein does not seem to be necessary for cccDNA generation, and is presumably released from (+)DNA by host nuclear DNA repair machinery. The protein is Protein P of Ground squirrel hepatitis virus (strain 27) (GSHV).